A 229-amino-acid polypeptide reads, in one-letter code: Methyltransferase ctvB (229 aa).

The protein belongs to the methyltransferase superfamily.

It functions in the pathway mycotoxin biosynthesis. Functionally, methyltransferase; part of the gene cluster that mediates the biosynthesis of citreoviridin, an inhibitor of the of F1-ATPase beta-subunit. The HR-PKS ctvA accepts acetyl-CoA as the starter unit and catalyzes eight iterations of malonyl-CoA extension and four iterations of SAM-dependent methylation at C4, C12, C14, and C16. The KR and DH domains selectively act on the first six iterations to generate the hexaene chain. In the last three iterations, the KR and DH domains terminate their functions to yield a beta,delta-diketo ester moiety, which then undergoes intramolecular cyclization to yield an alpha-pyrone intermediate. Subsequently, ctvB methylates the alpha-pyrone hydroxyl group to generate citreomontanin. In order to form the tetrahydrofuran ring with the correct stereochemistry, the terminal alkenes of citreomontanin need to undergo isomerization to yield a (17Z)-hexaene, a step that could be catalyzed by ctvC. The (17Z)-hexaene then undergoes bisepoxidation by ctvC to form a (17R,16R,15S,14R)-bisepoxide moiety. Lastly, ctvD acts as a regioselective hydrolase to form the tetrahydrofuran ring with the substituents in the correct absolute configuration, completing the biosynthesis of citreoviridin. The protein is Methyltransferase ctvB of Aspergillus terreus (strain NIH 2624 / FGSC A1156).